Reading from the N-terminus, the 185-residue chain is Elongation factor P (185 aa).

Belongs to the elongation factor P family.

It localises to the cytoplasm. Its pathway is protein biosynthesis; polypeptide chain elongation. Its function is as follows. Involved in peptide bond synthesis. Stimulates efficient translation and peptide-bond synthesis on native or reconstituted 70S ribosomes in vitro. Probably functions indirectly by altering the affinity of the ribosome for aminoacyl-tRNA, thus increasing their reactivity as acceptors for peptidyl transferase. The protein is Elongation factor P of Microcystis aeruginosa (strain NIES-843 / IAM M-2473).